Reading from the N-terminus, the 84-residue chain is Small ribosomal subunit protein uS17 (84 aa).

The protein belongs to the universal ribosomal protein uS17 family. In terms of assembly, part of the 30S ribosomal subunit.

Its function is as follows. One of the primary rRNA binding proteins, it binds specifically to the 5'-end of 16S ribosomal RNA. The sequence is that of Small ribosomal subunit protein uS17 from Clostridium novyi (strain NT).